Reading from the N-terminus, the 222-residue chain is Probable nicotinate-nucleotide adenylyltransferase (222 aa).

Belongs to the NadD family.

It catalyses the reaction nicotinate beta-D-ribonucleotide + ATP + H(+) = deamido-NAD(+) + diphosphate. The protein operates within cofactor biosynthesis; NAD(+) biosynthesis; deamido-NAD(+) from nicotinate D-ribonucleotide: step 1/1. In terms of biological role, catalyzes the reversible adenylation of nicotinate mononucleotide (NaMN) to nicotinic acid adenine dinucleotide (NaAD). The sequence is that of Probable nicotinate-nucleotide adenylyltransferase from Xylella fastidiosa (strain M12).